Reading from the N-terminus, the 246-residue chain is Transcription factor A, mitochondrial (246 aa).

Residues M1 to F42 constitute a mitochondrion transit peptide. A DNA-binding region (HMG box 1) is located at residues P50–Q118. Phosphoserine; by PKA is present on residues S56 and S61. At T122 the chain carries Phosphothreonine. The HMG box 2 DNA-binding region spans P155 to E219. S160 bears the Phosphoserine; by PKA mark. 2 positions are modified to phosphoserine: S193 and S195.

As to quaternary structure, monomer; binds DNA as a monomer. Homodimer. Component of the mitochondrial transcription initiation complex, composed at least of TFB2M, TFAM and POLRMT. In this complex TFAM recruits POLRMT to the promoter whereas TFB2M induces structural changes in POLRMT to enable promoter opening and trapping of the DNA non-template strand. Upon metabolic stress, forms a complex composed of FOXO3, SIRT3, TFAM and POLRMT. Interacts with TFB1M and TFB2M. Interacts with CLPX; this enhances DNA-binding. Phosphorylation by PKA within the HMG box 1 impairs DNA binding and promotes degradation by the AAA+ Lon protease.

It localises to the mitochondrion. Its subcellular location is the mitochondrion matrix. The protein localises to the mitochondrion nucleoid. Its function is as follows. Binds to the mitochondrial light strand promoter and functions in mitochondrial transcription regulation. Component of the mitochondrial transcription initiation complex, composed at least of TFB2M, TFAM and POLRMT that is required for basal transcription of mitochondrial DNA. In this complex, TFAM recruits POLRMT to a specific promoter whereas TFB2M induces structural changes in POLRMT to enable promoter opening and trapping of the DNA non-template strand. Required for accurate and efficient promoter recognition by the mitochondrial RNA polymerase. Promotes transcription initiation from the HSP1 and the light strand promoter by binding immediately upstream of transcriptional start sites. Is able to unwind DNA. Bends the mitochondrial light strand promoter DNA into a U-turn shape via its HMG boxes. Required for maintenance of normal levels of mitochondrial DNA. May play a role in organizing and compacting mitochondrial DNA. This is Transcription factor A, mitochondrial from Bos taurus (Bovine).